The chain runs to 119 residues: NADH-quinone oxidoreductase subunit 7 (119 aa).

3 consecutive transmembrane segments (helical) span residues 11–31 (LIYV…GALL), 59–79 (VHFY…AFLW), and 88–108 (LGLY…VGFL).

This sequence belongs to the complex I subunit 3 family. NDH-1 is composed of 15 different subunits, Nqo1 to Nqo15. The complex has a L-shaped structure, with the hydrophobic arm (subunits Nqo7, Nqo8 and Nqo10 to Nqo14) embedded in the membrane and the hydrophilic peripheral arm (subunits Nqo1 to Nqo6, Nqo9 and Nqo15) protruding into the bacterial cytoplasm. The hydrophilic domain contains all the redox centers.

The protein resides in the cell inner membrane. The catalysed reaction is a quinone + NADH + 5 H(+)(in) = a quinol + NAD(+) + 4 H(+)(out). In terms of biological role, NDH-1 shuttles electrons from NADH, via FMN and iron-sulfur (Fe-S) centers, to quinones in the respiratory chain. The immediate electron acceptor for the enzyme in this species is menaquinone. Couples the redox reaction to proton translocation (for every two electrons transferred, four hydrogen ions are translocated across the cytoplasmic membrane), and thus conserves the redox energy in a proton gradient required for the synthesis of ATP. This chain is NADH-quinone oxidoreductase subunit 7 (nqo7), found in Thermus thermophilus (strain ATCC 27634 / DSM 579 / HB8).